Here is a 585-residue protein sequence, read N- to C-terminus: A-type ATP synthase subunit A (585 aa).

Gly235 to Thr242 serves as a coordination point for ATP.

It belongs to the ATPase alpha/beta chains family. As to quaternary structure, has multiple subunits with at least A(3), B(3), C, D, E, F, H, I and proteolipid K(x).

It is found in the cell membrane. The catalysed reaction is ATP + H2O + 4 H(+)(in) = ADP + phosphate + 5 H(+)(out). Functionally, component of the A-type ATP synthase that produces ATP from ADP in the presence of a proton gradient across the membrane. The A chain is the catalytic subunit. This chain is A-type ATP synthase subunit A, found in Halobacterium salinarum (strain ATCC 29341 / DSM 671 / R1).